The chain runs to 1477 residues: Ring canal kelch protein (1477 aa).

Disordered regions lie at residues 19-62 (LSNG…PGLG), 76-96 (LLQQ…EGSG), and 108-137 (SQNS…YSNE). Over residues 20 to 46 (SNGNSNNNNQQQQQQQQGQNPQQPAQN) the composition is skewed to low complexity. 2 positions are modified to phosphoserine: Ser-108 and Ser-111. Residues 157 to 223 (CDVILVADDV…VYTATVEVNE (67 aa)) form the BTB domain. 6 Kelch repeats span residues 404 to 449 (ILLV…VLGD), 450 to 496 (KVYA…VLNG), 498 to 543 (IYAV…VVHG), 545 to 592 (LYAV…VLNN), 594 to 639 (LYAV…AHDG), and 641 to 687 (LYVV…MIDK). Residue Sec-690 is a non-standard amino acid, selenocysteine. 5 disordered regions span residues 744 to 841 (PAAP…PQRI), 1119 to 1200 (HSAA…GNGT), 1291 to 1326 (RDAN…QYED), 1359 to 1416 (PLLQ…FKPK), and 1446 to 1477 (PVSL…EHND). Composition is skewed to low complexity over residues 763–813 (APIG…ANNN) and 820–839 (AAPA…QQPQ). The span at 1125–1137 (IPSSSNINANRTT) shows a compositional bias: polar residues. Residues 1166 to 1192 (KTTSTGSGKSVTLAKKTSTAAARSSSS) are compositionally biased toward low complexity. Composition is skewed to low complexity over residues 1374–1391 (QQRR…QSQQ) and 1456–1477 (TTSS…EHND).

As to expression, both proteins are expressed in ovaries, male testis, ovariectomized females, cuticle, salivary gland and imaginal disks. Kelch short protein is the predominant form and is also expressed in fat bodies. On entry into metamorphosis levels of full-length protein increase in testis and imaginal disks.

It is found in the cytoplasm. The protein resides in the cytoskeleton. Component of ring canals that regulates the flow of cytoplasm between cells. May be involved in the regulation of cytoplasm flow from nurse cells to the oocyte during oogenesis. Binds actin. The chain is Ring canal kelch protein (kel) from Drosophila melanogaster (Fruit fly).